A 209-amino-acid chain; its full sequence is Chaperone protein TorD (209 aa).

Belongs to the TorD/DmsD family. TorD subfamily.

It is found in the cytoplasm. Its function is as follows. Involved in the biogenesis of TorA. Acts on TorA before the insertion of the molybdenum cofactor and, as a result, probably favors a conformation of the apoenzyme that is competent for acquiring the cofactor. The protein is Chaperone protein TorD of Shewanella sp. (strain MR-4).